The sequence spans 527 residues: Tubulin-specific chaperone E (527 aa).

Ser-2 bears the N-acetylserine mark. The 45-residue stretch at 27–71 (GVVPPVAGPWLGVEWDNPERGKHDGSHEGTVYFQCRHPTGGSFIR) folds into the CAP-Gly domain. 7 LRR repeats span residues 154–175 (NIRK…IHIA), 180–200 (HLEV…SVLT), 205–226 (ALKV…RCAM), 230–252 (GLEE…DVLQ), 253–274 (TVKL…YLIA), 278–299 (RLEQ…DAGI), and 308–329 (SLKY…NELD). The 43-residue stretch at 342 to 384 (NPLTKEDKEAETARLLIIASIGQLKTLNKCEILPEERRRAELD) folds into the LRRCT domain. Lys-463 carries the N6-acetyllysine modification. Ser-495 bears the Phosphoserine mark.

It belongs to the TBCE family. In terms of assembly, supercomplex made of cofactors A to E. Cofactors A and D function by capturing and stabilizing tubulin in a quasi-native conformation. Cofactor E binds to the cofactor D-tubulin complex; interaction with cofactor C then causes the release of tubulin polypeptides that are committed to the native state. Cofactors B and E can form a heterodimer which binds to alpha-tubulin and enhances their ability to dissociate tubulin heterodimers. Interacts with TBCD.

The protein resides in the cytoplasm. Its subcellular location is the cytoskeleton. In terms of biological role, tubulin-folding protein; involved in the second step of the tubulin folding pathway and in the regulation of tubulin heterodimer dissociation. Required for correct organization of microtubule cytoskeleton and mitotic splindle, and maintenance of the neuronal microtubule network. This chain is Tubulin-specific chaperone E (TBCE), found in Pongo abelii (Sumatran orangutan).